Consider the following 81-residue polypeptide: Antimicrobial peptide D2 (81 aa).

Residues 1–31 form the signal peptide; the sequence is MAKTVLGIHVTFLTLLFAVILLNDVMYTPVE. Disulfide bonds link C34-C81, C45-C66, C51-C75, and C55-C77.

Its function is as follows. Antimicrobial peptide probably active against fungi like B.sorokiniana, F.oxysporum, F.graminearum, F.avenaceum, B.cinerea, P.beta, P.infestans and P.debaryanum. The chain is Antimicrobial peptide D2 from Stellaria media (Common chickweed).